The following is a 112-amino-acid chain: Phosphoribosyl-AMP cyclohydrolase (112 aa).

Residue Asp76 participates in Mg(2+) binding. Residue Cys77 coordinates Zn(2+). Residues Asp78 and Asp80 each coordinate Mg(2+). Residues Cys93 and Cys100 each contribute to the Zn(2+) site.

This sequence belongs to the PRA-CH family. In terms of assembly, homodimer. The cofactor is Mg(2+). Requires Zn(2+) as cofactor.

The protein resides in the cytoplasm. It catalyses the reaction 1-(5-phospho-beta-D-ribosyl)-5'-AMP + H2O = 1-(5-phospho-beta-D-ribosyl)-5-[(5-phospho-beta-D-ribosylamino)methylideneamino]imidazole-4-carboxamide. It participates in amino-acid biosynthesis; L-histidine biosynthesis; L-histidine from 5-phospho-alpha-D-ribose 1-diphosphate: step 3/9. In terms of biological role, catalyzes the hydrolysis of the adenine ring of phosphoribosyl-AMP. This Streptococcus thermophilus (strain ATCC BAA-491 / LMD-9) protein is Phosphoribosyl-AMP cyclohydrolase.